The sequence spans 441 residues: Gluconate 2-dehydrogenase cytochrome c subunit (441 aa).

Residues Met-1 to Ala-19 form the signal peptide. Cytochrome c domains follow at residues Ala-26–Val-129, Pro-173–Gly-289, and Asp-312–Trp-403. Positions 40, 43, 44, 188, 191, 192, 325, 328, and 329 each coordinate heme c.

Heterotrimer. The cofactor is FAD. In terms of processing, binds 3 heme c groupd covalently per subunit.

It is found in the cell membrane. The enzyme catalyses D-gluconate + A = 2-dehydro-D-gluconate + AH2. In terms of biological role, part of the heterotrimer that catalyzes the conversion of D-gluconate to 2-dehydro-D-gluconate. The chain is Gluconate 2-dehydrogenase cytochrome c subunit from Pantoea cypripedii (Pectobacterium cypripedii).